The following is a 181-amino-acid chain: ATP-dependent protease subunit HslV (181 aa).

Thr9 is a catalytic residue. Positions 164, 167, and 170 each coordinate Na(+).

The protein belongs to the peptidase T1B family. HslV subfamily. A double ring-shaped homohexamer of HslV is capped on each side by a ring-shaped HslU homohexamer. The assembly of the HslU/HslV complex is dependent on binding of ATP.

It is found in the cytoplasm. It catalyses the reaction ATP-dependent cleavage of peptide bonds with broad specificity.. With respect to regulation, allosterically activated by HslU binding. Protease subunit of a proteasome-like degradation complex believed to be a general protein degrading machinery. The sequence is that of ATP-dependent protease subunit HslV from Gemmatimonas aurantiaca (strain DSM 14586 / JCM 11422 / NBRC 100505 / T-27).